A 432-amino-acid polypeptide reads, in one-letter code: N-acylneuraminate cytidylyltransferase (432 aa).

Position 1 is an N-acetylmethionine (M1). Residues M1–E38 form a disordered region. The BC1 motif motif lies at P15–R31. Positions R18–R29 are enriched in basic residues. An omega-N-methylarginine mark is found at R35 and R50. Substrate-binding residues include R50, N60, R109, S118, S120, and Q141. Positions K198–D204 match the BC2 motif motif. R199 is a catalytic residue. A BC3 motif motif is present at residues K267 to K274.

This sequence belongs to the CMP-NeuNAc synthase family. As to quaternary structure, homotetramer; the active enzyme is formed by a dimer of dimers. In terms of tissue distribution, liver.

Its subcellular location is the nucleus. It carries out the reaction an N-acylneuraminate + CTP = a CMP-N-acyl-beta-neuraminate + diphosphate. It participates in amino-sugar metabolism; N-acetylneuraminate metabolism. Its function is as follows. Catalyzes the activation of N-acetylneuraminic acid (NeuNAc) to cytidine 5'-monophosphate N-acetylneuraminic acid (CMP-NeuNAc), a substrate required for the addition of sialic acid. Has some activity toward NeuNAc, N-glycolylneuraminic acid (Neu5Gc) or 2-keto-3-deoxy-D-glycero-D-galacto-nononic acid (KDN). The polypeptide is N-acylneuraminate cytidylyltransferase (Cmas) (Rattus norvegicus (Rat)).